A 397-amino-acid chain; its full sequence is Phosphoglycerate kinase (397 aa).

Residues 21–23 (DFN), Arg37, 60–63 (HLGR), Arg119, and Arg152 each bind substrate. ATP is bound by residues Lys203, Gly294, Glu325, and 354-357 (GGDS).

Belongs to the phosphoglycerate kinase family. As to quaternary structure, monomer.

It localises to the cytoplasm. The enzyme catalyses (2R)-3-phosphoglycerate + ATP = (2R)-3-phospho-glyceroyl phosphate + ADP. The protein operates within carbohydrate degradation; glycolysis; pyruvate from D-glyceraldehyde 3-phosphate: step 2/5. This is Phosphoglycerate kinase from Prosthecochloris aestuarii (strain DSM 271 / SK 413).